We begin with the raw amino-acid sequence, 552 residues long: Formate--tetrahydrofolate ligase (552 aa).

63-70 (TPFGEGKT) is an ATP binding site.

Belongs to the formate--tetrahydrofolate ligase family.

The catalysed reaction is (6S)-5,6,7,8-tetrahydrofolate + formate + ATP = (6R)-10-formyltetrahydrofolate + ADP + phosphate. Its pathway is one-carbon metabolism; tetrahydrofolate interconversion. The sequence is that of Formate--tetrahydrofolate ligase from Caldicellulosiruptor bescii (strain ATCC BAA-1888 / DSM 6725 / KCTC 15123 / Z-1320) (Anaerocellum thermophilum).